Reading from the N-terminus, the 290-residue chain is Elongation factor Ts (290 aa).

The segment at 82 to 85 (TDFV) is involved in Mg(2+) ion dislocation from EF-Tu.

The protein belongs to the EF-Ts family.

It is found in the cytoplasm. Its function is as follows. Associates with the EF-Tu.GDP complex and induces the exchange of GDP to GTP. It remains bound to the aminoacyl-tRNA.EF-Tu.GTP complex up to the GTP hydrolysis stage on the ribosome. This Thiobacillus denitrificans (strain ATCC 25259 / T1) protein is Elongation factor Ts.